The primary structure comprises 291 residues: Elongation factor Ts (291 aa).

The involved in Mg(2+) ion dislocation from EF-Tu stretch occupies residues 79–82 (TDFV).

This sequence belongs to the EF-Ts family.

It localises to the cytoplasm. Associates with the EF-Tu.GDP complex and induces the exchange of GDP to GTP. It remains bound to the aminoacyl-tRNA.EF-Tu.GTP complex up to the GTP hydrolysis stage on the ribosome. The sequence is that of Elongation factor Ts from Ruegeria sp. (strain TM1040) (Silicibacter sp.).